Here is an 80-residue protein sequence, read N- to C-terminus: Sulfur carrier protein TusA (80 aa).

The active-site Cysteine persulfide intermediate is the Cys-17.

Belongs to the sulfur carrier protein TusA family.

The protein localises to the cytoplasm. Sulfur carrier protein which probably makes part of a sulfur-relay system. The protein is Sulfur carrier protein TusA of Pseudomonas putida (strain ATCC 47054 / DSM 6125 / CFBP 8728 / NCIMB 11950 / KT2440).